The primary structure comprises 99 residues: Aspartyl/glutamyl-tRNA(Asn/Gln) amidotransferase subunit C (99 aa).

This sequence belongs to the GatC family. In terms of assembly, heterotrimer of A, B and C subunits.

The enzyme catalyses L-glutamyl-tRNA(Gln) + L-glutamine + ATP + H2O = L-glutaminyl-tRNA(Gln) + L-glutamate + ADP + phosphate + H(+). It carries out the reaction L-aspartyl-tRNA(Asn) + L-glutamine + ATP + H2O = L-asparaginyl-tRNA(Asn) + L-glutamate + ADP + phosphate + 2 H(+). In terms of biological role, allows the formation of correctly charged Asn-tRNA(Asn) or Gln-tRNA(Gln) through the transamidation of misacylated Asp-tRNA(Asn) or Glu-tRNA(Gln) in organisms which lack either or both of asparaginyl-tRNA or glutaminyl-tRNA synthetases. The reaction takes place in the presence of glutamine and ATP through an activated phospho-Asp-tRNA(Asn) or phospho-Glu-tRNA(Gln). This Paracidovorax citrulli (strain AAC00-1) (Acidovorax citrulli) protein is Aspartyl/glutamyl-tRNA(Asn/Gln) amidotransferase subunit C.